Reading from the N-terminus, the 619-residue chain is N-acetylmuramoyl-L-alanine amidase domain-containing protein SAOUHSC_02979 (619 aa).

Positions 1-27 (MPKNKILIYLLSTTLVLPTLVSPTAYA) are cleaved as a signal peptide. Disordered regions lie at residues 25-83 (AYAD…TIDD), 134-226 (SDYE…SMSD), and 238-290 (EDAK…NQKD). Basic and acidic residues-rich tracts occupy residues 30–65 (PQKD…KADK), 73–82 (NNDKKFKTID), and 137–146 (EQPRNGEKST). The span at 147-156 (NDSNKNSDNS) shows a compositional bias: low complexity. Basic and acidic residues predominate over residues 157-175 (IKNDTDTQSSKQDKADNQK). The segment covering 176–192 (APKSNNTKPSTSNKQPN) has biased composition (polar residues). Over residues 214-226 (QKSSSKDNQSMSD) the composition is skewed to low complexity. Residues 238–260 (EDAKKTQKDYASQSKKDKNEKSN) show a composition bias toward basic and acidic residues. The tract at residues 327–468 (IAKDAHRIGQ…LNSIIKHYQL (142 aa)) is N-acetylmuramoyl-L-alanine amidase. The region spanning 488–617 (DYDDSSDEFK…AAAEELSYIT (130 aa)) is the Peptidase C51 domain.

It in the N-terminal section; belongs to the N-acetylmuramoyl-L-alanine amidase 2 family.

The protein resides in the secreted. The polypeptide is N-acetylmuramoyl-L-alanine amidase domain-containing protein SAOUHSC_02979 (Staphylococcus aureus (strain NCTC 8325 / PS 47)).